The following is a 4558-amino-acid chain: Multifunctional-autoprocessing repeats-in-toxin (4558 aa).

The signal sequence occupies residues Met1 to Ala32. RtxA repeat units follow at residues Gly114–Ser131, Gly134–Thr151, Gly154–Leu170, Gly174–Thr197, Gly200–Thr217, Gly220–Thr237, Gly268–His285, Gly288–Phe304, Gly594–His611, Gly614–Thr630, Gly634–Thr651, Gly654–Gly668, Ala751–Gly763, Met769–Asn781, Ala792–Leu808, Met811–Thr826, Met830–Thr845, Gly851–Leu865, Met868–Ala885, Met887–Asn901, Met906–Asp920, Met925–Ala942, Met944–Leu960, Met982–Asn994, Met1001–Ser1016, Gly1041–Leu1053, Ala1077–Asp1089, Ala1097–Val1112, Gly1120–Ile1132, Ala1135–Asn1152, Trp1155–Arg1169, Ala1173–Val1189, Gly1194–Thr1209, Ala1211–Val1227, Ala1230–Phe1246, Lys1252–Thr1266, Ala1268–Thr1285, Ala1306–Ala1323, and Met1325–Asn1342. Disordered stretches follow at residues His1623–Ser1688, Thr1752–Ala1779, and Asp1791–Gly1890. Residues Thr1625–Leu1634 show a composition bias toward polar residues. The segment covering Ser1635–Gln1654 has biased composition (basic and acidic residues). Polar residues predominate over residues Gly1660–Ala1679. The segment covering Asp1791–His1815 has biased composition (basic and acidic residues). Residues His1879–Ala1888 show a composition bias toward polar residues. The ACD domain maps to Val1988–Ala2422. ATP is bound at residue Ser1999–Glu2003. Positions 2003, 2065, and 2149 each coordinate Mg(2+). Arg2255 serves as a coordination point for ATP. Glu2326 provides a ligand contact to Mg(2+). A membrane localization region (MLD) region spans residues Glu2574–Leu2658. Residues Glu2734 to Leu3098 form a rho inactivation domain (RID) region. The ABH effector region stretch occupies residues Val3195–Ala3310. Residues Ala3404–Ser3426 form a disordered region. Positions Gly3414–Ser3426 are enriched in polar residues. One can recognise a Peptidase C80 domain in the interval Pro3462–Trp3646. 1D-myo-inositol hexakisphosphate contacts are provided by residues Glu3468–Arg3470, Lys3495–His3496, and Arg3526. His3532 functions as the For cysteine protease activity in the catalytic mechanism. Ser3577 serves as a coordination point for 1D-myo-inositol hexakisphosphate. Residue Cys3581 is the Nucleophile; for cysteine protease activity of the active site. Residues Ser3610–Arg3612, Arg3623–Lys3624, Lys3636, and Lys3641 each bind 1D-myo-inositol hexakisphosphate.

Requires Mg(2+) as cofactor.

It localises to the secreted. It is found in the host cytoplasm. The protein resides in the host cytosol. Its subcellular location is the host cell membrane. The catalysed reaction is L-lysyl-/S-(2E,6E,10E)-geranylgeranyl-L-cysteinyl-[protein] + hexadecanoyl-CoA = N(6)-hexadecanoyl-L-lysyl-/S-(2E,6E,10E)-geranylgeranyl-L-cysteinyl-[protein] + CoA + H(+). It catalyses the reaction L-lysyl-/S-(2E,6E,10E)-geranylgeranyl-L-cysteinyl-[protein] + dodecanoyl-CoA = N(6)-dodecanoyl-L-lysyl-/S-(2E,6E,10E)-geranylgeranyl-L-cysteinyl-[protein] + CoA + H(+). It carries out the reaction L-lysyl-/S-(2E,6E,10E)-geranylgeranyl-L-cysteinyl-[protein] + decanoyl-CoA = N(6)-decanoyl-L-lysyl-/S-(2E,6E,10E)-geranylgeranyl-L-cysteinyl-[protein] + CoA + H(+). With respect to regulation, protease activity is inhibited by N-ethylmaleimide but not other protease inhibitors. Protease activity is inhibited by aza-leucine epoxide. Protease activity is activated upon binding inositol hexakisphosphate (InsP6) via an allosteric mechanism: the active site is disordered or occluded in the absence of InsP6, protecting the protease active-site sulfhydryl until the toxin enters a eukaryotic cell. Upon processing at the Leu-3441-Ala-3442 site, the peptidase C80 domain is converted to a form with much reduced affinity for InsP6, but is reactivated for high affinity binding of InsP6 by cooperative binding of both a new substrate and InsP6. Reactivation allows cleavage at other sites, specifically at Leu residues between the effector domains. Precursor of a multifunctional toxin that causes destruction of the actin cytoskeleton by covalent cross-linking of actin and inactivation of Rho GTPases when translocated into the host cytoplasm. Upon translocation into the host cell, undergoes autoprocessing in cis mediated by the peptidase C80 domain (also named CPD domain): the protease activity is activated upon binding inositol hexakisphosphate (InsP6) present at the host cell membrane and delivers the Cysteine protease domain-containing toxin F3 chain to the host cytosol. The Cysteine protease domain-containing toxin F3 chain will then further cleave and release effector toxin chains that cause disassembly of the actin cytoskeleton and enhance V.cholerae colonization of the small intestine, possibly by facilitating evasion of phagocytic cells. Functionally, following autocatalytic cleavage in cis at the Leu-3441-Ala-3442 site, this chain mediates processing in trans to release other individual toxin chains to the host cytosol. Released effector toxin chains cause disassembly of the actin cytoskeleton and enhance V.cholerae colonization of the small intestine, possibly by facilitating evasion of phagocytic cells. In terms of biological role, actin-directed toxin that catalyzes the covalent cross-linking of host cytoplasmic monomeric actin. Mediates the cross-link between 'Lys-50' of one monomer and 'Glu-270' of another actin monomer, resulting in formation of highly toxic actin oligomers that cause cell rounding. The toxin can be highly efficient at very low concentrations by acting on formin homology family proteins: toxic actin oligomers bind with high affinity to formins and adversely affect both nucleation and elongation abilities of formins, causing their potent inhibition in both profilin-dependent and independent manners. Acts as an acid--amino-acid ligase that transfers the gamma-phosphoryl group of ATP to the 'Glu-270' actin residue, resulting in the formation of an activated acyl phosphate intermediate. This intermediate is further hydrolyzed and the energy of hydrolysis is utilized for the formation of the amide bond between actin subunits. Its function is as follows. N-epsilon-fatty acyltransferase that mediates lysine-palmitoylation of host Rho GTPase proteins, with a strong preference for host Rac1. After delivery to the host cytosol, localizes to the host cell membrane where it palmitoylates host Rho GTPase proteins, resulting in loss of all active GTP-bound Rho and subsequent actin depolymerization. Prenylation of host Rac1 at the C-terminus is required for lysine-palmitoylation. Indirectly activates the small GTPase CDC42. This is Multifunctional-autoprocessing repeats-in-toxin from Vibrio cholerae serotype O1 (strain ATCC 39315 / El Tor Inaba N16961).